Here is a 423-residue protein sequence, read N- to C-terminus: Transmembrane protease serine 11E (423 aa).

Over M1–W18 the chain is Cytoplasmic. Residues V19–V39 form a helical; Signal-anchor for type II membrane protein membrane-spanning segment. Residues H40 to I423 lie on the Extracellular side of the membrane. In terms of domain architecture, SEA spans R48 to K166. 4 N-linked (GlcNAc...) asparagine glycosylation sites follow: N74, N165, N182, and N223. Cystine bridges form between C176–C297, C217–C233, C342–C358, and C369–C398. Positions I192 to G422 constitute a Peptidase S1 domain. Residues H232 and D277 each act as charge relay system in the active site. Catalysis depends on S373, which acts as the Charge relay system.

Belongs to the peptidase S1 family. As to quaternary structure, forms a heterodimer with SERPINA5 and SERPINE1. N-glycosylated. In terms of tissue distribution, expressed in epidermal, oral and male reproductive tissues.

It localises to the cell membrane. The protein localises to the secreted. Inhibited by SERPINA5. Serine protease which possesses both gelatinolytic and caseinolytic activities. Shows a preference for Arg in the P1 position. The protein is Transmembrane protease serine 11E (Tmprss11e) of Mus musculus (Mouse).